We begin with the raw amino-acid sequence, 921 residues long: Protein translocase subunit SecA (921 aa).

ATP-binding positions include Gln-87, 105–109, and Asp-501; that span reads GEGKT. Residues 831-886 form a disordered region; sequence PFPVINTETSGPSEEPAGLFSQGTTGGDIPAPQPMAGFPSAAPMPPRPQPVPTGAE. Pro residues predominate over residues 872-881; it reads APMPPRPQPV. 4 residues coordinate Zn(2+): Cys-905, Cys-907, Cys-916, and His-917.

Belongs to the SecA family. As to quaternary structure, monomer and homodimer. Part of the essential Sec protein translocation apparatus which comprises SecA, SecYEG and auxiliary proteins SecDF-YajC and YidC. Zn(2+) serves as cofactor.

It is found in the cell inner membrane. It localises to the cytoplasm. It catalyses the reaction ATP + H2O + cellular proteinSide 1 = ADP + phosphate + cellular proteinSide 2.. Part of the Sec protein translocase complex. Interacts with the SecYEG preprotein conducting channel. Has a central role in coupling the hydrolysis of ATP to the transfer of proteins into and across the cell membrane, serving both as a receptor for the preprotein-SecB complex and as an ATP-driven molecular motor driving the stepwise translocation of polypeptide chains across the membrane. The polypeptide is Protein translocase subunit SecA (Gluconobacter oxydans (strain 621H) (Gluconobacter suboxydans)).